The primary structure comprises 70 residues: Putative peptide YY-3 (70 aa).

The first 23 residues, 1–23 (MVSVCRPWPAVAIALLALLVCLG), serve as a signal peptide directing secretion.

The protein belongs to the NPY family.

The protein resides in the secreted. This is Putative peptide YY-3 (PYY3) from Homo sapiens (Human).